A 277-amino-acid chain; its full sequence is Diaminopimelate epimerase (277 aa).

Asparagine 11 and asparagine 62 together coordinate substrate. Cysteine 71 functions as the Proton donor in the catalytic mechanism. Substrate contacts are provided by residues 72-73, asparagine 160, asparagine 193, and 211-212; these read GN and ER. Residue cysteine 220 is the Proton acceptor of the active site. Residue 221-222 participates in substrate binding; that stretch reads GT.

The protein belongs to the diaminopimelate epimerase family. As to quaternary structure, homodimer.

The protein resides in the cytoplasm. The catalysed reaction is (2S,6S)-2,6-diaminopimelate = meso-2,6-diaminopimelate. Its pathway is amino-acid biosynthesis; L-lysine biosynthesis via DAP pathway; DL-2,6-diaminopimelate from LL-2,6-diaminopimelate: step 1/1. In terms of biological role, catalyzes the stereoinversion of LL-2,6-diaminopimelate (L,L-DAP) to meso-diaminopimelate (meso-DAP), a precursor of L-lysine. The protein is Diaminopimelate epimerase of Methanococcus maripaludis (strain C6 / ATCC BAA-1332).